The primary structure comprises 340 residues: Serpentine receptor class alpha-23 (340 aa).

A run of 6 helical transmembrane segments spans residues 34 to 54 (FISTIVLISYCFSWLAIQALW), 114 to 136 (YFYYLTNYFSTYSVFSLTFDRLI), 150 to 170 (FIAISLLVLQFLLAILSFYIA), 199 to 219 (VRTVVMVSCIIVTGFAYYLSV), 250 to 270 (ILIVLQFSCTMISSFGVNLLL), and 284 to 304 (VGAFLPGVAYANLCLPLAIYF).

It belongs to the nematode receptor-like protein sra family.

The protein localises to the membrane. This chain is Serpentine receptor class alpha-23 (sra-23), found in Caenorhabditis elegans.